The primary structure comprises 260 residues: MALRRPMVAGNWKMNGSAQLALELFNKFATKLQDDSAEVVLCPPSIYLESVRQQLDANKDALNGCLVRMGAQNLSQHDFGAYTGEVSGQMLKDSGCRYVIIGHSERRRMYGETSDIVAEKFAAAQKHGLTPILCVGESGPAREARRTFEVIAEELDVVIEKNGTMAFDNAIIAYEPLWAVGTGKSATPEQAQEVHAFIRKRLSEVSPYIGENIRILYGGSVTPSNAADLFAQPDVDGGLIGGVSLNSTEFLSLCSIAMSA.

Substrate is bound at residue 11–13; the sequence is NWK. The active-site Electrophile is the His-103. The Proton acceptor role is filled by Glu-175. Residues Gly-181, Ser-220, and 241 to 242 each bind substrate; that span reads GG.

The protein belongs to the triosephosphate isomerase family. As to quaternary structure, homodimer.

It localises to the cytoplasm. It carries out the reaction D-glyceraldehyde 3-phosphate = dihydroxyacetone phosphate. It functions in the pathway carbohydrate biosynthesis; gluconeogenesis. It participates in carbohydrate degradation; glycolysis; D-glyceraldehyde 3-phosphate from glycerone phosphate: step 1/1. Functionally, involved in the gluconeogenesis. Catalyzes stereospecifically the conversion of dihydroxyacetone phosphate (DHAP) to D-glyceraldehyde-3-phosphate (G3P). This is Triosephosphate isomerase from Shewanella sediminis (strain HAW-EB3).